The sequence spans 219 residues: Ribose-5-phosphate isomerase A (219 aa).

Residues 28–31 (TGST), 81–84 (DGAD), and 94–97 (KGGG) contribute to the substrate site. Glutamate 103 (proton acceptor) is an active-site residue. Lysine 121 lines the substrate pocket.

It belongs to the ribose 5-phosphate isomerase family. Homodimer.

The enzyme catalyses aldehydo-D-ribose 5-phosphate = D-ribulose 5-phosphate. The protein operates within carbohydrate degradation; pentose phosphate pathway; D-ribose 5-phosphate from D-ribulose 5-phosphate (non-oxidative stage): step 1/1. Functionally, catalyzes the reversible conversion of ribose-5-phosphate to ribulose 5-phosphate. The protein is Ribose-5-phosphate isomerase A of Photorhabdus laumondii subsp. laumondii (strain DSM 15139 / CIP 105565 / TT01) (Photorhabdus luminescens subsp. laumondii).